Here is a 383-residue protein sequence, read N- to C-terminus: Homoserine O-succinyltransferase (383 aa).

The AB hydrolase-1 domain maps to 51–360; it reads NAILLCHALS…EAEHGHDSFL (310 aa). Ser-157 acts as the Nucleophile in catalysis. Arg-227 lines the substrate pocket. Residues Asp-323 and His-356 contribute to the active site. A substrate-binding site is contributed by Asp-357.

Belongs to the AB hydrolase superfamily. MetX family. Homodimer.

It is found in the cytoplasm. The catalysed reaction is L-homoserine + succinyl-CoA = O-succinyl-L-homoserine + CoA. It participates in amino-acid biosynthesis; L-methionine biosynthesis via de novo pathway; O-succinyl-L-homoserine from L-homoserine: step 1/1. Transfers a succinyl group from succinyl-CoA to L-homoserine, forming succinyl-L-homoserine. This Acidithiobacillus ferrooxidans (strain ATCC 23270 / DSM 14882 / CIP 104768 / NCIMB 8455) (Ferrobacillus ferrooxidans (strain ATCC 23270)) protein is Homoserine O-succinyltransferase.